We begin with the raw amino-acid sequence, 967 residues long: Transmembrane channel-like protein 5 (967 aa).

Composition is skewed to polar residues over residues M1–Y10, G21–E31, N53–N62, and Q168–P184. Residues M1–K240 form a disordered region. Over M1 to K420 the chain is Extracellular. Residues F421–G441 traverse the membrane as a helical segment. Over A442–T449 the chain is Cytoplasmic. The chain crosses the membrane as a helical span at residues G450–Y470. Topologically, residues T471–Q487 are extracellular. Residues L488–S508 traverse the membrane as a helical segment. Residues M509–H581 are Cytoplasmic-facing. The chain crosses the membrane as a helical span at residues V582 to L602. At A603–P616 the chain is on the extracellular side. A helical membrane pass occupies residues G617–Y637. At S638–N660 the chain is on the cytoplasmic side. The chain crosses the membrane as a helical span at residues I661–L681. Residues S682–D694 are Extracellular-facing. A helical transmembrane segment spans residues I695 to F715. At L716–W749 the chain is on the cytoplasmic side. The helical transmembrane segment at L750–F770 threads the bilayer. At Y771–F796 the chain is on the extracellular side. The chain crosses the membrane as a helical span at residues F797–I817. At W818–N861 the chain is on the cytoplasmic side. A helical membrane pass occupies residues L862–L882. Residues Y883 to A967 lie on the Extracellular side of the membrane.

This sequence belongs to the TMC family. As to expression, ubiquitously expressed.

The protein localises to the membrane. In terms of biological role, probable component of an ion channel. Molecular function hasn't been characterized yet. In Mus musculus (Mouse), this protein is Transmembrane channel-like protein 5.